A 55-amino-acid polypeptide reads, in one-letter code: Large ribosomal subunit protein bL33 (55 aa).

Post-translationally, the protein is methylated on either Ala-2 or Lys-3.

The chain is Large ribosomal subunit protein bL33 from Rhodopseudomonas palustris (strain ATCC BAA-98 / CGA009).